The chain runs to 155 residues: Large ribosomal subunit protein uL22 (155 aa).

Belongs to the universal ribosomal protein uL22 family. In terms of assembly, part of the 50S ribosomal subunit.

In terms of biological role, this protein binds specifically to 23S rRNA. It makes multiple contacts with different domains of the 23S rRNA in the assembled 50S subunit and ribosome. Its function is as follows. The globular domain of the protein is located near the polypeptide exit tunnel on the outside of the subunit, while an extended beta-hairpin is found that lines the wall of the exit tunnel in the center of the 70S ribosome. The sequence is that of Large ribosomal subunit protein uL22 from Pyrococcus horikoshii (strain ATCC 700860 / DSM 12428 / JCM 9974 / NBRC 100139 / OT-3).